We begin with the raw amino-acid sequence, 330 residues long: ADP-L-glycero-D-manno-heptose-6-epimerase (330 aa).

Residues 11-12 (FI), 32-33 (DD), Q39, Q54, 75-79 (QGACA), and N92 each bind NADP(+). Y139 acts as the Proton acceptor in catalysis. Residue K143 participates in NADP(+) binding. N168 provides a ligand contact to substrate. Residues V169 and K177 each contribute to the NADP(+) site. The Proton acceptor role is filled by K177. Substrate contacts are provided by residues R179, H186, 200-203 (FGEH), R213, and Y292.

The protein belongs to the NAD(P)-dependent epimerase/dehydratase family. HldD subfamily. Homopentamer. NADP(+) serves as cofactor.

It catalyses the reaction ADP-D-glycero-beta-D-manno-heptose = ADP-L-glycero-beta-D-manno-heptose. It functions in the pathway nucleotide-sugar biosynthesis; ADP-L-glycero-beta-D-manno-heptose biosynthesis; ADP-L-glycero-beta-D-manno-heptose from D-glycero-beta-D-manno-heptose 7-phosphate: step 4/4. Catalyzes the interconversion between ADP-D-glycero-beta-D-manno-heptose and ADP-L-glycero-beta-D-manno-heptose via an epimerization at carbon 6 of the heptose. The sequence is that of ADP-L-glycero-D-manno-heptose-6-epimerase from Pseudomonas aeruginosa (strain UCBPP-PA14).